The chain runs to 185 residues: Elongation factor P (185 aa).

The protein belongs to the elongation factor P family.

Its subcellular location is the cytoplasm. The protein operates within protein biosynthesis; polypeptide chain elongation. Involved in peptide bond synthesis. Stimulates efficient translation and peptide-bond synthesis on native or reconstituted 70S ribosomes in vitro. Probably functions indirectly by altering the affinity of the ribosome for aminoacyl-tRNA, thus increasing their reactivity as acceptors for peptidyl transferase. The protein is Elongation factor P of Dictyoglomus thermophilum (strain ATCC 35947 / DSM 3960 / H-6-12).